Reading from the N-terminus, the 85-residue chain is Large ribosomal subunit protein bL31B (85 aa).

It belongs to the bacterial ribosomal protein bL31 family. Type B subfamily. As to quaternary structure, part of the 50S ribosomal subunit.

The protein is Large ribosomal subunit protein bL31B of Macrococcus caseolyticus (strain JCSC5402) (Macrococcoides caseolyticum).